Consider the following 112-residue polypeptide: Large ribosomal subunit protein P2 (112 aa).

Low complexity predominate over residues 69 to 85; sequence AGGAAMPAAAAGGAPAA. The disordered stretch occupies residues 69–112; it reads AGGAAMPAAAAGGAPAAAEDKAEAKKPEAEPEEEEDDMGFSLFD. Over residues 86–97 the composition is skewed to basic and acidic residues; that stretch reads AEDKAEAKKPEA.

Belongs to the eukaryotic ribosomal protein P1/P2 family. In terms of assembly, P1 and P2 exist as dimers at the large ribosomal subunit. Post-translationally, phosphorylated.

In terms of biological role, plays an important role in the elongation step of protein synthesis. The protein is Large ribosomal subunit protein P2 of Babesia bovis.